A 143-amino-acid chain; its full sequence is Transcriptional regulator MraZ (143 aa).

SpoVT-AbrB domains lie at 5 to 47 (TYTP…PRAA) and 76 to 119 (TDEQ…DAQA).

Belongs to the MraZ family. As to quaternary structure, forms oligomers.

It localises to the cytoplasm. It is found in the nucleoid. The polypeptide is Transcriptional regulator MraZ (Mycobacterium bovis (strain ATCC BAA-935 / AF2122/97)).